The sequence spans 193 residues: uncharacterized protein (193 aa).

A run of 4 helical transmembrane segments spans residues 8 to 28, 46 to 66, 82 to 102, and 141 to 161; these read GVLV…VVAI, FFIA…VASA, GLSI…ALVV, and IALT…LLAA.

This sequence to M.leprae ML1222.

The protein resides in the cell membrane. This is an uncharacterized protein from Mycobacterium tuberculosis (strain CDC 1551 / Oshkosh).